Consider the following 207-residue polypeptide: Guanylate kinase (207 aa).

The region spanning 4–184 is the Guanylate kinase-like domain; it reads GTLYIVSAPS…ALMDFKAIIR (181 aa). 11 to 18 contacts ATP; sequence APSGAGKS.

This sequence belongs to the guanylate kinase family.

The protein localises to the cytoplasm. It catalyses the reaction GMP + ATP = GDP + ADP. In terms of biological role, essential for recycling GMP and indirectly, cGMP. The protein is Guanylate kinase of Vibrio vulnificus (strain CMCP6).